The chain runs to 689 residues: DNA topoisomerase 1 (689 aa).

Positions Asp3 to Ile113 constitute a Toprim domain. Residues Glu9 and Asp82 each contribute to the Mg(2+) site. In terms of domain architecture, Topo IA-type catalytic spans Glu129 to Glu557. The interaction with DNA stretch occupies residues Ser163–Gln168. Tyr298 serves as the catalytic O-(5'-phospho-DNA)-tyrosine intermediate. Residues Ser328–Met357 are disordered. 3 consecutive C4-type zinc fingers follow at residues Cys577 to Cys603, Cys617 to Cys645, and Cys658 to Cys681.

The protein belongs to the type IA topoisomerase family. As to quaternary structure, monomer. Requires Mg(2+) as cofactor.

It catalyses the reaction ATP-independent breakage of single-stranded DNA, followed by passage and rejoining.. In terms of biological role, releases the supercoiling and torsional tension of DNA, which is introduced during the DNA replication and transcription, by transiently cleaving and rejoining one strand of the DNA duplex. Introduces a single-strand break via transesterification at a target site in duplex DNA. The scissile phosphodiester is attacked by the catalytic tyrosine of the enzyme, resulting in the formation of a DNA-(5'-phosphotyrosyl)-enzyme intermediate and the expulsion of a 3'-OH DNA strand. The free DNA strand then undergoes passage around the unbroken strand, thus removing DNA supercoils. Finally, in the religation step, the DNA 3'-OH attacks the covalent intermediate to expel the active-site tyrosine and restore the DNA phosphodiester backbone. The polypeptide is DNA topoisomerase 1 (Staphylococcus aureus (strain bovine RF122 / ET3-1)).